We begin with the raw amino-acid sequence, 511 residues long: Cytochrome P450 monooxygenase nodR (511 aa).

Residues 8 to 28 (ILFPISWEQSPIFLAVGLIFA) traverse the membrane as a helical segment. Asn-76 and Asn-373 each carry an N-linked (GlcNAc...) asparagine glycan. Position 452 (Cys-452) interacts with heme.

The protein belongs to the cytochrome P450 family. Heme is required as a cofactor.

It is found in the membrane. It participates in secondary metabolite biosynthesis. Cytochrome P450 monooxygenase; part of the gene cluster that mediates the biosynthesis of the indole diterpenes nodulisporic acids (NA). Nodulisporic acid A (NAA) and its chemically modified derivatives are of particular significance because of their highly potent insecticidal activity against blood-feeding arthropods and lack of observable adverse effects on mammals, in particular the tremogenicity associated with the paspaline-derived IDTs is not observed. The geranylgeranyl diphosphate (GGPP) synthase ggs1, localized outside of the cluster, is proposed to catalyze the first step in nodulisporic acid biosynthesis via conversion of farnesyl pyrophosphate and isopentyl pyrophosphate into geranylgeranyl pyrophosphate (GGPP). Condensation of indole-3-glycerol phosphate with GGPP by the prenyl transferase nodC then forms 3-geranylgeranylindole (3-GGI). Epoxidation by the FAD-dependent monooxygenase nodM leads to a single-epoxidized-GGI that is substrate of the terpene cyclase nodB for cyclization to yield emindole SB. The terminal methyl carbon, C28, of emindole SB is then oxidized by the cytochrome P450 monooxygenase nodW to produce nodulisporic acid F (NAF), the pentacyclic core of NAA. NAF is converted to nodulisporic acid E (NAE) via prenylation. This step is probably performed by one of the indole diterpene prenyltransferases nodD1 or nodD2. Several oxidation steps performed by the FAD-linked oxidoreductase nodO and one of the cytochrome P450 monooxygenase nodR, nodX or nodZ further convert NAE to nodulisporic acid D (NAD). NAD is substrate of cytochrome P450 monooxygenase nodJ to produce the precursor of nodulisporic acid C (NAC), converted to NAC by one of the indole diterpene prenyltransferases nodD1 or nodD2. The FAD-dependent monooxygenase nodY2 then oxidizes NAC to nodulisporic acid B (NAB). Finally NAB is converted to NAA by one of the cytochrome P450 monooxygenases nodR, nodX or nodZ. The polypeptide is Cytochrome P450 monooxygenase nodR (Hypoxylon pulicicidum).